Reading from the N-terminus, the 41-residue chain is Fibrinogen beta chain (41 aa).

Residues Ala1 to Arg41 form a disordered region. Tyr4 bears the Sulfotyrosine mark. Residues Pro10–Pro26 are compositionally biased toward basic and acidic residues. Residues Gly14–Arg16 are beta-chain polymerization, binding distal domain of another fibrin.

In terms of assembly, heterohexamer; disulfide linked. Contains 2 sets of 3 non-identical chains (alpha, beta and gamma). The 2 heterotrimers are in head to head conformation with the N-termini in a small central domain. Conversion of fibrinogen to fibrin is triggered by thrombin, which cleaves fibrinopeptides A and B from alpha and beta chains, and thus exposes the N-terminal polymerization sites responsible for the formation of the soft clot.

It localises to the secreted. Cleaved by the protease thrombin to yield monomers which, together with fibrinogen alpha (FGA) and fibrinogen gamma (FGG), polymerize to form an insoluble fibrin matrix. Fibrin has a major function in hemostasis as one of the primary components of blood clots. In addition, functions during the early stages of wound repair to stabilize the lesion and guide cell migration during re-epithelialization. Was originally thought to be essential for platelet aggregation, based on in vitro studies using anticoagulated blood. However subsequent studies have shown that it is not absolutely required for thrombus formation in vivo. Enhances expression of SELP in activated platelets. Maternal fibrinogen is essential for successful pregnancy. Fibrin deposition is also associated with infection, where it protects against IFNG-mediated hemorrhage. May also facilitate the antibacterial immune response via both innate and T-cell mediated pathways. This chain is Fibrinogen beta chain (FGB), found in Oryctolagus cuniculus (Rabbit).